The chain runs to 192 residues: GTP-dependent dephospho-CoA kinase (192 aa).

Residues D49, V50, V51, D68, K70, and E127 each contribute to the GTP site.

This sequence belongs to the GTP-dependent DPCK family.

The catalysed reaction is 3'-dephospho-CoA + GTP = GDP + CoA + H(+). It functions in the pathway cofactor biosynthesis; coenzyme A biosynthesis. Catalyzes the GTP-dependent phosphorylation of the 3'-hydroxyl group of dephosphocoenzyme A to form coenzyme A (CoA). This chain is GTP-dependent dephospho-CoA kinase, found in Halorubrum lacusprofundi (strain ATCC 49239 / DSM 5036 / JCM 8891 / ACAM 34).